We begin with the raw amino-acid sequence, 239 residues long: Lipid transferase CIDEC (239 aa).

Positions 1–35 (MDYAMKSLSLLYPRSLSRHVAVSTAVVTQQLVSKP) are required for liquid-liquid phase separation (LLPS). The 78-residue stretch at 41-118 (RARPCRVSTA…VLLKGQKWKP (78 aa)) folds into the CIDE-N domain. Residues 123-126 (RKKR) carry the RKKR polybasic motif motif.

The protein belongs to the CIDE family. Homodimer. Homooligomer; undergoes liquid-liquid phase separation (LLPS) via its N-terminus, facilitating lipid droplet fusion, occurs at the lipid droplet contact sites. Interacts with CIDEA. Interacts with PLIN1. Interacts with NFAT5; this interaction is direct and retains NFAT5 in the cytoplasm. Interacts with CEBPB. Interacts with isoform CLSTN3beta of CLSTN3; inhibiting the lipid transferase activity of CIDEC. In terms of processing, ubiquitinated and targeted to proteasomal degradation, resulting in a short half-life (about 15 minutes in 3T3-L1 cells). Protein stability depends on triaclyglycerol synthesis, fatty acid availability and lipid droplet formation. As to expression, expressed almost exclusively in adipose tissue, including subcutaneous and epididymal white adipose tissue (at protein level). Although abundantly present in brown adipose tissue at the mRNA level, the protein is almost undetectable in this tissue, or at moderate levels. Expressed in the mammary gland, in stromal adipose tissue, but becomes undetectable at the end of pregnancy and during lactation (at protein level). Expressed at low levels in skeletal muscle and heart.

The protein localises to the lipid droplet. The protein resides in the endoplasmic reticulum. It localises to the nucleus. It catalyses the reaction a triacyl-sn-glycerol(in) = a triacyl-sn-glycerol(out). Its function is as follows. Lipid transferase specifically expressed in white adipose tissue, which promotes unilocular lipid droplet formation by mediating lipid droplet fusion. Lipid droplet fusion promotes their enlargement, restricting lipolysis and favoring lipid storage. Localizes on the lipid droplet surface, at focal contact sites between lipid droplets, and mediates atypical lipid droplet fusion by undergoing liquid-liquid phase separation (LLPS) and promoting directional net neutral lipid transfer from the smaller to larger lipid droplets. The transfer direction may be driven by the internal pressure difference between the contacting lipid droplet pair. Its role in neutral lipid transfer and lipid droplet enlargement is activated by the interaction with PLIN1. May also act as a CEBPB coactivator in the white adipose tissue to control the expression of a subset of CEBPB downstream target genes, including SOCS1, SOCS3, TGFB1, TGFBR1, ID2 and XDH. When overexpressed in preadipocytes, induces apoptosis or increases cell susceptibility to apoptosis induced by serum deprivation or TGFB treatment. This Mus musculus (Mouse) protein is Lipid transferase CIDEC.